Reading from the N-terminus, the 270-residue chain is Interleukin-1 beta (270 aa).

The propeptide occupies 1-118 (MATVPEPTSE…VYDDDAFVCD (118 aa)).

Belongs to the IL-1 family. In terms of assembly, monomer. In its precursor form, weakly interacts with full-length MEFV; the mature cytokine does not interact at all. Interacts with integrins ITGAV:ITGBV and ITGA5:ITGB1; integrin-binding is required for IL1B signaling. Interacts with cargo receptor TMED10; the interaction is direct and is required for the secretion of IL1B mature form. Interacts with HSP90AB1; the interaction facilitates cargo translocation into the ERGIC. Interacts with HSP90B1; the interaction facilitates cargo translocation into the ERGIC.

The protein resides in the cytoplasm. Its subcellular location is the cytosol. The protein localises to the secreted. It localises to the lysosome. It is found in the extracellular exosome. In terms of biological role, potent pro-inflammatory cytokine. Initially discovered as the major endogenous pyrogen, induces prostaglandin synthesis, neutrophil influx and activation, T-cell activation and cytokine production, B-cell activation and antibody production, and fibroblast proliferation and collagen production. Promotes Th17 differentiation of T-cells. Synergizes with IL12/interleukin-12 to induce IFNG synthesis from T-helper 1 (Th1) cells. Plays a role in angiogenesis by inducing VEGF production synergistically with TNF and IL6. Involved in transduction of inflammation downstream of pyroptosis: its mature form is specifically released in the extracellular milieu by passing through the gasdermin-D (GSDMD) pore. This Eumetopias jubatus (Steller sea lion) protein is Interleukin-1 beta (IL1B).